The following is an 81-amino-acid chain: Photosystem I iron-sulfur center (81 aa).

4Fe-4S ferredoxin-type domains lie at 2-31 and 39-68; these read SHTV…MVPW and IASA…VRVY. [4Fe-4S] cluster-binding residues include Cys11, Cys14, Cys17, Cys21, Cys48, Cys51, Cys54, and Cys58.

In terms of assembly, the eukaryotic PSI reaction center is composed of at least 11 subunits. Requires [4Fe-4S] cluster as cofactor.

Its subcellular location is the plastid. The protein localises to the chloroplast thylakoid membrane. The enzyme catalyses reduced [plastocyanin] + hnu + oxidized [2Fe-2S]-[ferredoxin] = oxidized [plastocyanin] + reduced [2Fe-2S]-[ferredoxin]. In terms of biological role, apoprotein for the two 4Fe-4S centers FA and FB of photosystem I (PSI); essential for photochemical activity. FB is the terminal electron acceptor of PSI, donating electrons to ferredoxin. The C-terminus interacts with PsaA/B/D and helps assemble the protein into the PSI complex. Required for binding of PsaD and PsaE to PSI. PSI is a plastocyanin/cytochrome c6-ferredoxin oxidoreductase, converting photonic excitation into a charge separation, which transfers an electron from the donor P700 chlorophyll pair to the spectroscopically characterized acceptors A0, A1, FX, FA and FB in turn. This Chlorella vulgaris (Green alga) protein is Photosystem I iron-sulfur center.